A 215-amino-acid chain; its full sequence is Ependymin-2 (215 aa).

The N-terminal stretch at 1–20 is a signal peptide; sequence MHTVKLLCVVFSCLCAVAWA. Residues asparagine 71 and asparagine 94 are each glycosylated (N-linked (GlcNAc...) asparagine).

It belongs to the ependymin family. As to quaternary structure, forms disulfide-linked dimers. In terms of processing, different glycosylation variants are known as EPD-beta and EPD-gamma. Post-translationally, binds calcium through the terminal sialic acids. In terms of tissue distribution, EPDs are synthesized in the meninx and secreted in the cerebrospinal fluid.

It localises to the secreted. In terms of biological role, may play a role in neural plasticity. May be involved during axon regeneration. This Carassius auratus (Goldfish) protein is Ependymin-2 (epd2).